Here is a 298-residue protein sequence, read N- to C-terminus: Inosose dehydratase (298 aa).

Belongs to the IolE/MocC family. It depends on glutathione as a cofactor. Requires Co(2+) as cofactor. Mn(2+) is required as a cofactor.

It catalyses the reaction scyllo-inosose = 3D-3,5/4-trihydroxycyclohexane-1,2-dione + H2O. In terms of biological role, catalyzes the dehydration of inosose (2-keto-myo-inositol, 2KMI or 2,4,6/3,5-pentahydroxycyclohexanone) to 3D-(3,5/4)-trihydroxycyclohexane-1,2-dione (D-2,3-diketo-4-deoxy-epi-inositol). The polypeptide is Inosose dehydratase (Serratia proteamaculans (strain 568)).